Reading from the N-terminus, the 31-residue chain is Cyclotide cter-C (31 aa).

The segment at residues 1–31 (GVPCAESCVWIPCTVTALLGCSCKDKVCYLD) is a cross-link (cyclopeptide (Gly-Asp)). Cystine bridges form between cysteine 4–cysteine 21, cysteine 8–cysteine 23, and cysteine 13–cysteine 28.

In terms of processing, contains 3 disulfide bonds. This is a cyclic peptide.

In terms of biological role, probably participates in a plant defense mechanism. In Clitoria ternatea (Butterfly pea), this protein is Cyclotide cter-C.